A 354-amino-acid chain; its full sequence is 3'-5' exonuclease (354 aa).

A disordered region spans residues M1–K120. A compositionally biased stretch (basic and acidic residues) spans K13 to A50. Over residues T59–R70 the composition is skewed to basic residues. Basic and acidic residues predominate over residues K71–P91. Residues S104, S110, and S112 each carry the phosphoserine modification. The 3'-5' exonuclease domain occupies W149 to R314. Mg(2+) contacts are provided by D163, E165, and D301.

Belongs to the WRNexo family.

It localises to the nucleus. Functionally, has exonuclease activity on both single-stranded and duplex templates bearing overhangs, but not blunt ended duplex DNA, and cleaves in a 3'-5' direction. Essential for the formation of DNA replication focal centers. Has an important role in maintaining genome stability. This Drosophila sechellia (Fruit fly) protein is 3'-5' exonuclease.